Consider the following 455-residue polypeptide: Proline--tRNA ligase (455 aa).

The L-proline site is built by Thr101, Glu103, and Arg132. The ATP site is built by Arg132, Glu134, Gln216, and Thr219. His221 provides a ligand contact to L-proline. Positions 253 and 255 each coordinate ATP. Residues 329 to 359 form an interaction with tRNA region; sequence EIKGVPLRIEVGPKDIENKKITLFRRDTMEK.

Belongs to the class-II aminoacyl-tRNA synthetase family. ProS type 3 subfamily. Homodimer. The dimer is functionally asymmetric: only one of the two active sites at a time is able to form prolyl-adenylate, and only one tRNA molecule binds per dimer.

The protein localises to the cytoplasm. It catalyses the reaction tRNA(Pro) + L-proline + ATP = L-prolyl-tRNA(Pro) + AMP + diphosphate. Its activity is regulated as follows. Inhibited by high concentrations of prolinamide. Functionally, catalyzes the attachment of proline to tRNA(Pro) in a two-step reaction: proline is first activated by ATP to form Pro-AMP and then transferred to the acceptor end of tRNA(Pro). Can inadvertently accommodate and process non-cognate amino acids such as cysteine and alanine. The sequence is that of Proline--tRNA ligase (proS) from Methanocaldococcus jannaschii (strain ATCC 43067 / DSM 2661 / JAL-1 / JCM 10045 / NBRC 100440) (Methanococcus jannaschii).